The chain runs to 168 residues: Outer-membrane lipoprotein YfiB (168 aa).

Positions 1 to 25 are cleaved as a signal peptide; that stretch reads MLPQRLHPSRLLALALFSLVLGLAG. Residue C26 is the site of N-palmitoyl cysteine attachment. A lipid anchor (S-diacylglycerol cysteine) is attached at C26. The OmpA-like domain occupies 53–168; that stretch reads EGWEFGMSSK…RRVAIIVPAE (116 aa).

This sequence belongs to the outer membrane OOP (TC 1.B.6) superfamily. Homodimer. Interacts with YfiR. The YfiB-YfiR complex is a 2:2 heterotetramer.

It is found in the cell outer membrane. Both lipid anchor in the outer membrane and peptidoglycan binding are required for full activity. Once activated by certain cell stress, the dimeric YfiB transforms from a compact conformation to a stretched conformation, allowing the periplasmic domain of the membrane-anchored YfiB to penetrate the cell wall and sequester the YfiR dimer. GMP enhances the binding affinity between YfiB and YfiR. Activates the diguanylate cyclase TpbB/YfiN by sequestering YfiR at the outer membrane, which counteracts the YfiR-mediated repression of TpbB/YfiN at the inner membrane and leads to increased c-di-GMP production. May act as a sensor of envelope stress. In terms of biological role, part of the YfiB-TpbB-YfiR (or yfiBNR) system, encoding a tripartite signaling module that modulates intracellular c-di-GMP levels. The system is a key regulator of the small colony variant (SCV) phenotype, and plays an important role in biofilm formation and in vivo persistence. The c-di-GMP produced by TpbB/YfiN stimulates the production of the Pel and Psl exopolysaccharides, which promotes surface attachment, generates an SCV phenotype and confers resistance against phagocytosis. The polypeptide is Outer-membrane lipoprotein YfiB (Pseudomonas aeruginosa (strain ATCC 15692 / DSM 22644 / CIP 104116 / JCM 14847 / LMG 12228 / 1C / PRS 101 / PAO1)).